A 777-amino-acid chain; its full sequence is Translation initiation factor IF-2 (777 aa).

Disordered stretches follow at residues 30–54 (SPSM…QDEN) and 98–117 (EDSN…SFKE). Over residues 98–109 (EDSNEKTNDRDS) the composition is skewed to basic and acidic residues. Residues 279–449 (PKPPIVTFMG…LLIAELMKLE (171 aa)) enclose the tr-type G domain. Residues 288-295 (GHVDHGKT) are G1. 288–295 (GHVDHGKT) serves as a coordination point for GTP. The G2 stretch occupies residues 313-317 (GITQH). Residues 334 to 337 (DTPG) form a G3 region. Residues 334–338 (DTPGH) and 388–391 (NKID) contribute to the GTP site. The segment at 388 to 391 (NKID) is G4. Residues 425–427 (SAK) are G5.

The protein belongs to the TRAFAC class translation factor GTPase superfamily. Classic translation factor GTPase family. IF-2 subfamily.

It is found in the cytoplasm. Its function is as follows. One of the essential components for the initiation of protein synthesis. Protects formylmethionyl-tRNA from spontaneous hydrolysis and promotes its binding to the 30S ribosomal subunits. Also involved in the hydrolysis of GTP during the formation of the 70S ribosomal complex. This chain is Translation initiation factor IF-2, found in Wolbachia sp. subsp. Brugia malayi (strain TRS).